A 293-amino-acid polypeptide reads, in one-letter code: Taste receptor type 2 member 143 (293 aa).

The Extracellular segment spans residues 1 to 6; that stretch reads MPSTPT. Residues 7–27 traverse the membrane as a helical segment; it reads LIFIIIFYLVSLASMLQNGFM. The Cytoplasmic segment spans residues 28 to 55; sequence MIVLGREWMRNRTLPAADMIVASLASSR. Residues 56–76 traverse the membrane as a helical segment; that stretch reads FCLHGIAILANLLASFDFCYQ. Over 77–79 the chain is Extracellular; sequence ANL. The helical transmembrane segment at 80–100 threads the bilayer; it reads IGILWDFTNTLIFWLTAWLAI. Residues 101-127 lie on the Cytoplasmic side of the membrane; the sequence is FYCVKISSFSHPVLFWLKWRISQLVPR. A helical membrane pass occupies residues 128 to 148; the sequence is LLVVSLIIGGLSAVISATGNF. The Extracellular segment spans residues 149 to 181; the sequence is MANQMTISQGFHGNCTFGHMSLDFYRYYYLYHS. Asn162 carries N-linked (GlcNAc...) asparagine glycosylation. Residues 182–202 form a helical membrane-spanning segment; sequence VLMWFTPFFLFLVSVIVLMFS. Over 203–227 the chain is Cytoplasmic; sequence LYQHVEKMRGHRPGPWDLHTQAHTM. Residues 228 to 248 form a helical membrane-spanning segment; the sequence is ALKSLTFFFIFYIFFFLALVI. Residues 249 to 264 lie on the Extracellular side of the membrane; sequence SSTKRKSMQSYYWARE. Residues 265–285 form a helical membrane-spanning segment; it reads AIIYTGIFLNSIILLFSNPKL. Over 286-293 the chain is Cytoplasmic; the sequence is RKALKMRF.

Belongs to the G-protein coupled receptor T2R family.

Its subcellular location is the membrane. In terms of biological role, putative taste receptor which may play a role in the perception of bitterness. The protein is Taste receptor type 2 member 143 (Tas2r143) of Mus musculus (Mouse).